A 601-amino-acid chain; its full sequence is Beta-phellandrene synthase (601 aa).

A chloroplast-targeting transit peptide spans 1–35 (MSTISIHHVGILRNPLPSKNKRALINNPWSLSLPR). Residues Asp-356 and Asp-360 each coordinate Mn(2+). The DDXXD motif signature appears at 356–360 (DDVYD). 2 homodimerization regions span residues 362–368 (YGTLDEL) and 434–471 (EAKW…LSIP). Mn(2+)-binding residues include Asp-499 and Glu-507.

This sequence belongs to the terpene synthase family. As to quaternary structure, homodimer. Requires Mn(2+) as cofactor. It depends on Mg(2+) as a cofactor. Expressed in peltate glandular trichomes. Present at low levels in flowers, leaves and stems.

It localises to the plastid. The protein localises to the chloroplast. It carries out the reaction (2E)-geranyl diphosphate = beta-phellandrene + diphosphate. The catalysed reaction is (2E)-geranyl diphosphate = (1R,5R)-sabinene + diphosphate. The protein operates within secondary metabolite biosynthesis; terpenoid biosynthesis. Involved in the biosynthesis of phenolic monoterpenes natural products. Monoterpene synthase that catalyzes mainly the formation of olefins such as sabinene and beta-phellandrene, and minor amounts of other monoterpenes (e.g. myrcene, gamma-terpinene, alpha-thujene and alpha-pinene) from geranyl diphosphate (GPP). This Origanum vulgare (Wild marjoram) protein is Beta-phellandrene synthase.